Here is a 661-residue protein sequence, read N- to C-terminus: DNA-directed RNA polymerase subunit beta' (661 aa).

Zn(2+) contacts are provided by cysteine 69, cysteine 71, cysteine 87, and cysteine 90. Residues aspartate 489, aspartate 491, and aspartate 493 each coordinate Mg(2+).

It belongs to the RNA polymerase beta' chain family. RpoC1 subfamily. In plastids the minimal PEP RNA polymerase catalytic core is composed of four subunits: alpha, beta, beta', and beta''. When a (nuclear-encoded) sigma factor is associated with the core the holoenzyme is formed, which can initiate transcription. The cofactor is Mg(2+). Requires Zn(2+) as cofactor.

It is found in the plastid. The protein resides in the chloroplast. The enzyme catalyses RNA(n) + a ribonucleoside 5'-triphosphate = RNA(n+1) + diphosphate. Functionally, DNA-dependent RNA polymerase catalyzes the transcription of DNA into RNA using the four ribonucleoside triphosphates as substrates. The chain is DNA-directed RNA polymerase subunit beta' from Chaetosphaeridium globosum (Charophycean green alga).